Consider the following 811-residue polypeptide: Vacuolar protein sorting-associated protein 70 (811 aa).

Residues 1-21 (MRMIQRERKREKEEGQLKERT) are compositionally biased toward basic and acidic residues. Residues 1-63 (MRMIQRERKR…MNDSFTLTSR (63 aa)) form a disordered region. An N-linked (GlcNAc...) asparagine glycan is attached at asparagine 55. Residues 90 to 110 (FMYLILASLLLYMGFVAAFAP) form a helical membrane-spanning segment. N-linked (GlcNAc...) asparagine glycosylation occurs at asparagine 237. Positions 334 to 367 (FSDTPGDPTTPGYPSKDSDTEHMSPVGRVPRIPS) are disordered. Low complexity predominate over residues 336 to 345 (DTPGDPTTPG). Zn(2+) contacts are provided by histidine 445, aspartate 456, and aspartate 522. Residues asparagine 568 and asparagine 599 are each glycosylated (N-linked (GlcNAc...) asparagine). Histidine 607 lines the Zn(2+) pocket. N-linked (GlcNAc...) asparagine glycosylation is present at asparagine 670.

Belongs to the peptidase M28 family. M28B subfamily. Requires Zn(2+) as cofactor.

It localises to the membrane. In terms of biological role, involved in vacuolar protein sorting. This chain is Vacuolar protein sorting-associated protein 70 (VPS70), found in Saccharomyces cerevisiae (strain ATCC 204508 / S288c) (Baker's yeast).